A 409-amino-acid chain; its full sequence is MARQKFERKKPHVNIGTIGHVDHGKTTLTAAITMAMAARGGGKGKKYDDIDSAPEEKQRGITINTAHVEYETEKRHYAHVDCPGHADYVKNMITGAAQMDGAILVVSGADGPMPQTKEHILLAKQVGVPNVVVFLNKEDQVDDAELLELVELEVRETLDNYEFPGDEIPIVPGSALLALQALSENPEITPGQNPWVDKIFKLMDTVDAYIPTPERDTEKPFLMAVEDVFSITGRGTVATGRVERGSVKVGETIEIVGLRETRTTTVTGLEMFQKTLEESVAGDNVGVLLRGIQKIDIQRGMVLAKPGSITPHTKFTAQVYILTRDEGGRHTPFFAGYRPQFYVRTTDVTGKIETFRTDDDQPTQMVMPGDRIKMEVELIQPIAIEKGMRFAIREGGRTVGAGVVSAIVL.

A tr-type G domain is found at Lys-10–Glu-214. Positions Gly-19–Thr-26 are G1. Position 19 to 26 (Gly-19 to Thr-26) interacts with GTP. Thr-26 lines the Mg(2+) pocket. The interval Gly-60–Asn-64 is G2. A G3 region spans residues Asp-81–Gly-84. Residues Asp-81–His-85 and Asn-136–Asp-139 each bind GTP. The interval Asn-136–Asp-139 is G4. A G5 region spans residues Ser-174 to Leu-176.

The protein belongs to the TRAFAC class translation factor GTPase superfamily. Classic translation factor GTPase family. EF-Tu/EF-1A subfamily.

The protein localises to the plastid. It is found in the chloroplast. The enzyme catalyses GTP + H2O = GDP + phosphate + H(+). GTP hydrolase that promotes the GTP-dependent binding of aminoacyl-tRNA to the A-site of ribosomes during protein biosynthesis. The sequence is that of Elongation factor Tu, chloroplastic (tufA) from Pleurastrum terricola (Filamentous green alga).